A 498-amino-acid polypeptide reads, in one-letter code: Glycerol kinase (498 aa).

An ADP-binding site is contributed by threonine 12. Positions 12, 13, and 14 each coordinate ATP. Threonine 12 is a sn-glycerol 3-phosphate binding site. Residue arginine 16 participates in ADP binding. Sn-glycerol 3-phosphate contacts are provided by arginine 82, glutamate 83, tyrosine 135, and aspartate 245. Glycerol is bound by residues arginine 82, glutamate 83, tyrosine 135, aspartate 245, and glutamine 246. ADP contacts are provided by threonine 267 and glycine 310. ATP is bound by residues threonine 267, glycine 310, glutamine 314, and glycine 411. Glycine 411 and asparagine 415 together coordinate ADP.

Belongs to the FGGY kinase family. In terms of assembly, homotetramer and homodimer (in equilibrium).

It carries out the reaction glycerol + ATP = sn-glycerol 3-phosphate + ADP + H(+). The protein operates within polyol metabolism; glycerol degradation via glycerol kinase pathway; sn-glycerol 3-phosphate from glycerol: step 1/1. With respect to regulation, activated by phosphorylation and inhibited by fructose 1,6-bisphosphate (FBP). Its function is as follows. Key enzyme in the regulation of glycerol uptake and metabolism. Catalyzes the phosphorylation of glycerol to yield sn-glycerol 3-phosphate. The protein is Glycerol kinase of Clostridium botulinum (strain Alaska E43 / Type E3).